A 240-amino-acid chain; its full sequence is Lactate utilization protein C (240 aa).

The protein belongs to the LutC/YkgG family.

Is involved in L-lactate degradation and allows cells to grow with lactate as the sole carbon source. This Geobacillus thermodenitrificans (strain NG80-2) protein is Lactate utilization protein C.